The sequence spans 483 residues: Altronate oxidoreductase (483 aa).

Residue 18–29 (IIQFGEGNFLRA) participates in NAD(+) binding.

The protein belongs to the mannitol dehydrogenase family. UxaB subfamily.

It carries out the reaction D-altronate + NAD(+) = keto-D-tagaturonate + NADH + H(+). The protein operates within carbohydrate metabolism; pentose and glucuronate interconversion. This chain is Altronate oxidoreductase, found in Escherichia coli (strain 55989 / EAEC).